A 516-amino-acid chain; its full sequence is Maturase K (516 aa).

Belongs to the intron maturase 2 family. MatK subfamily.

It is found in the plastid. It localises to the chloroplast. In terms of biological role, usually encoded in the trnK tRNA gene intron. Probably assists in splicing its own and other chloroplast group II introns. The protein is Maturase K of Disporum sessile (Japanese fairy bells).